Reading from the N-terminus, the 352-residue chain is Chymopapain (352 aa).

The N-terminal stretch at 1-18 is a signal peptide; sequence MATMSSISKIIFLATCLI. A propeptide spans 19 to 134 (activation peptide); sequence IHMGLSSADF…EDFTYKHVTN (116 aa). Residue N86 is glycosylated (N-linked (GlcNAc...) asparagine). Cystine bridges form between C156-C197, C190-C229, and C287-C338. Residue C159 is part of the active site. Residues H293 and N313 contribute to the active site.

The protein belongs to the peptidase C1 family.

It carries out the reaction Specificity similar to that of papain.. Its function is as follows. Cysteine proteinase with a high level of diversity in substrate specificity. The chain is Chymopapain from Carica papaya (Papaya).